We begin with the raw amino-acid sequence, 137 residues long: NADPH-dependent 7-cyano-7-deazaguanine reductase (137 aa).

Residue cysteine 51 is the Thioimide intermediate of the active site. The active-site Proton donor is aspartate 58. Substrate contacts are provided by residues 73–75 and 92–93; these read VEL and HE.

This sequence belongs to the GTP cyclohydrolase I family. QueF type 1 subfamily.

It is found in the cytoplasm. The catalysed reaction is 7-aminomethyl-7-carbaguanine + 2 NADP(+) = 7-cyano-7-deazaguanine + 2 NADPH + 3 H(+). It participates in tRNA modification; tRNA-queuosine biosynthesis. In terms of biological role, catalyzes the NADPH-dependent reduction of 7-cyano-7-deazaguanine (preQ0) to 7-aminomethyl-7-deazaguanine (preQ1). The chain is NADPH-dependent 7-cyano-7-deazaguanine reductase from Gloeobacter violaceus (strain ATCC 29082 / PCC 7421).